A 643-amino-acid chain; its full sequence is Transmembrane protein 62 (643 aa).

A helical transmembrane segment spans residues V9–A29. Residue N180 is glycosylated (N-linked (GlcNAc...) asparagine). 4 helical membrane passes run I431–F451, Y484–I504, G532–L552, and I572–F592.

Its subcellular location is the membrane. The protein is Transmembrane protein 62 (Tmem62) of Mus musculus (Mouse).